The sequence spans 231 residues: UPF0173 metal-dependent hydrolase AF_1265 (231 aa).

It belongs to the UPF0173 family.

This is UPF0173 metal-dependent hydrolase AF_1265 from Archaeoglobus fulgidus (strain ATCC 49558 / DSM 4304 / JCM 9628 / NBRC 100126 / VC-16).